The chain runs to 99 residues: NADH-quinone oxidoreductase subunit K 1 (99 aa).

3 helical membrane-spanning segments follow: residues 3-23, 28-48, and 59-79; these read PVNYLYLAALLFAIGASGVLV, IVVFMCVELMLNACNLALVTF, and IVAFFTMVVAAAEVVVGLAII.

The protein belongs to the complex I subunit 4L family. In terms of assembly, NDH-1 is composed of 14 different subunits. Subunits NuoA, H, J, K, L, M, N constitute the membrane sector of the complex.

It is found in the cell membrane. It carries out the reaction a quinone + NADH + 5 H(+)(in) = a quinol + NAD(+) + 4 H(+)(out). NDH-1 shuttles electrons from NADH, via FMN and iron-sulfur (Fe-S) centers, to quinones in the respiratory chain. The immediate electron acceptor for the enzyme in this species is believed to be a menaquinone. Couples the redox reaction to proton translocation (for every two electrons transferred, four hydrogen ions are translocated across the cytoplasmic membrane), and thus conserves the redox energy in a proton gradient. The sequence is that of NADH-quinone oxidoreductase subunit K 1 from Streptomyces griseus subsp. griseus (strain JCM 4626 / CBS 651.72 / NBRC 13350 / KCC S-0626 / ISP 5235).